A 325-amino-acid chain; its full sequence is Beta-ketoacyl-[acyl-carrier-protein] synthase III (325 aa).

Catalysis depends on residues Cys116 and His252. The interval 253 to 257 (QANLR) is ACP-binding. Residue Asn282 is part of the active site.

It belongs to the thiolase-like superfamily. FabH family. As to quaternary structure, homodimer.

The protein localises to the cytoplasm. The enzyme catalyses malonyl-[ACP] + acetyl-CoA + H(+) = 3-oxobutanoyl-[ACP] + CO2 + CoA. It participates in lipid metabolism; fatty acid biosynthesis. In terms of biological role, catalyzes the condensation reaction of fatty acid synthesis by the addition to an acyl acceptor of two carbons from malonyl-ACP. Catalyzes the first condensation reaction which initiates fatty acid synthesis and may therefore play a role in governing the total rate of fatty acid production. Possesses both acetoacetyl-ACP synthase and acetyl transacylase activities. Its substrate specificity determines the biosynthesis of branched-chain and/or straight-chain of fatty acids. In Xanthomonas axonopodis pv. citri (strain 306), this protein is Beta-ketoacyl-[acyl-carrier-protein] synthase III.